A 343-amino-acid chain; its full sequence is MDNLDQLVQQAQADFAGVSDSAQLEQAKARYLGKSGALTEQLKGLGKLPPEEKREAGAAINRAKTAIEAALEARRNALREAALLAQLAAEALDVTLPGRGAQGGGLHPVSRTLERIEMLFRSIGFIVADGPEIETDWHNFTALNTPENHPARSMHDTFYLEGRDDVLLRTHTSPVQIRTMLAHVKRHAEAAAMPEIRVIIPGRVYRVDSDATHSPMFHQVEGLWVGEKVSFADLKGVIADFLRKFFETEDLQVRFRPSFFPFTEPSAEIDVAFMSGPLKGRWLEIAGCGMVHPNVLRFGGVDPERYTGFAFGMGPDRLTMLRYGVNDLRLFFEGDLRFLSQFR.

A Mg(2+)-binding site is contributed by Glu264.

The protein belongs to the class-II aminoacyl-tRNA synthetase family. Phe-tRNA synthetase alpha subunit type 1 subfamily. Tetramer of two alpha and two beta subunits. Requires Mg(2+) as cofactor.

It is found in the cytoplasm. It catalyses the reaction tRNA(Phe) + L-phenylalanine + ATP = L-phenylalanyl-tRNA(Phe) + AMP + diphosphate + H(+). In Azoarcus sp. (strain BH72), this protein is Phenylalanine--tRNA ligase alpha subunit.